A 506-amino-acid polypeptide reads, in one-letter code: Probable alpha-L-arabinofuranosidase B (506 aa).

Residues 1 to 26 (MLLPRGFNRAVVTALGVVGTGTLVAA) form the signal peptide. The segment at 27–343 (GPCDIYSSGG…ANIVAAKYAV (317 aa)) is catalytic. 3 cysteine pairs are disulfide-bonded: cysteine 29–cysteine 39, cysteine 89–cysteine 94, and cysteine 184–cysteine 185. Aspartate 227 serves as a coordination point for substrate. Glutamate 229 functions as the Nucleophile in the catalytic mechanism. Asparagine 230 is a substrate binding site. Asparagine 285 carries an N-linked (GlcNAc...) asparagine glycan. Residue glycine 304 coordinates substrate. Aspartate 305 (proton donor) is an active-site residue. An ABD region spans residues 344–506 (APLTSGPSLT…VSWVVSTSFA (163 aa)). N-linked (GlcNAc...) asparagine glycosylation occurs at asparagine 375. The cysteines at positions 409 and 447 are disulfide-linked. Positions 424, 427, 443, 471, 476, and 496 each coordinate substrate.

The protein belongs to the glycosyl hydrolase 54 family.

Its subcellular location is the secreted. The catalysed reaction is Hydrolysis of terminal non-reducing alpha-L-arabinofuranoside residues in alpha-L-arabinosides.. The protein operates within glycan metabolism; L-arabinan degradation. Functionally, alpha-L-arabinofuranosidase involved in the degradation of arabinoxylan, a major component of plant hemicellulose. Able to hydrolyze 1,5-, 1,3- and 1,2-alpha-linkages not only in L-arabinofuranosyl oligosaccharides, but also in polysaccharides containing terminal non-reducing L-arabinofuranoses in side chains, like L-arabinan, arabinogalactan and arabinoxylan. In Aspergillus terreus (strain NIH 2624 / FGSC A1156), this protein is Probable alpha-L-arabinofuranosidase B (abfB).